The chain runs to 178 residues: Glucagon-1 (178 aa).

Positions methionine 1–alanine 21 are cleaved as a signal peptide. Propeptides lie at residues serine 83–serine 87, glutamate 123–serine 134, and serine 171–histidine 178.

This sequence belongs to the glucagon family.

It localises to the secreted. Its function is as follows. Promotes hydrolysis of glycogen and lipids, and raises the blood sugar level. In Oncorhynchus mykiss (Rainbow trout), this protein is Glucagon-1 (gcg1).